The primary structure comprises 419 residues: Keratin, type I cytoskeletal 47 kDa (419 aa).

The tract at residues 1 to 81 (MSFRSSSSYS…SSSFSNFGGN (81 aa)) is head. The coil 1A stretch occupies residues 82-117 (DKQTMQNLNDRLASYLEKVRALEAANADLELKIREW). Residues 82 to 397 (DKQTMQNLND…RLLEGEFGSL (316 aa)) enclose the IF rod domain. Residues 118–139 (YEKQKGSGIGAGSKDFSKYFEI) form a linker 1 region. The interval 140–231 (ISDLRNKILS…KNHEEEMSIA (92 aa)) is coil 1B. The segment at 232 to 254 (KSSSAGQVNVEMDAAPGIDLNKI) is linker 12. The tract at residues 255–393 (LSDMRADYET…ETYRRLLEGE (139 aa)) is coil 2. The tract at residues 394-419 (FGSLKSSIVQATEVSTSQSSSSSKKD) is tail.

This sequence belongs to the intermediate filament family. In terms of assembly, heterotetramer of two type I and two type II keratins.

The sequence is that of Keratin, type I cytoskeletal 47 kDa (xk81b2) from Xenopus laevis (African clawed frog).